The chain runs to 224 residues: Urease accessory protein UreF (224 aa).

The protein belongs to the UreF family. As to quaternary structure, ureD, UreF and UreG form a complex that acts as a GTP-hydrolysis-dependent molecular chaperone, activating the urease apoprotein by helping to assemble the nickel containing metallocenter of UreC. The UreE protein probably delivers the nickel.

It is found in the cytoplasm. Functionally, required for maturation of urease via the functional incorporation of the urease nickel metallocenter. The protein is Urease accessory protein UreF of Pseudomonas putida (strain GB-1).